We begin with the raw amino-acid sequence, 505 residues long: L-carnitine/gamma-butyrobetaine antiporter (505 aa).

The next 12 membrane-spanning stretches (helical) occupy residues 10 to 30 (IEPK…WLTV), 51 to 71 (WGWA…WLVF), 92 to 112 (IFMM…SIEI), 143 to 163 (GPLP…FFFV), 195 to 215 (FYLV…TPLV), 231 to 251 (LDAI…ACGL), 263 to 283 (SYLS…SFIM), 316 to 336 (WTVF…IFLA), 347 to 367 (LCFG…TVLG), 403 to 423 (LSTA…VTLI), 446 to 466 (LLVR…LLAL), and 475 to 495 (AIIA…LSFI).

This sequence belongs to the BCCT transporter (TC 2.A.15) family. CaiT subfamily. In terms of assembly, homotrimer.

Its subcellular location is the cell inner membrane. The enzyme catalyses 4-(trimethylamino)butanoate(in) + (R)-carnitine(out) = 4-(trimethylamino)butanoate(out) + (R)-carnitine(in). It functions in the pathway amine and polyamine metabolism; carnitine metabolism. Its function is as follows. Catalyzes the exchange of L-carnitine for gamma-butyrobetaine. The protein is L-carnitine/gamma-butyrobetaine antiporter of Salmonella gallinarum (strain 287/91 / NCTC 13346).